The chain runs to 310 residues: MEFKHISVLLNECLDALDIKDNGIYVDCTLGGAGHSSHILERLSNEGLLIGIDQDRDALKAAKERLKRFENVKYVHSNFYDIDNILQNLDIPKVDGILMDLGVSSYQLDEGARGFSYMKDAPLDMRMNRDNDFSAYEIVNEYSEDELYKIIRNYGEERFAKRISNCIVNRRSDKPIETTMELVDIIKAAIPAKARREGPHPAKRTFQAIRIEVNSELKILNQTIEDGVNRLKPGGRMAIITFHSLEDRIVKLKFRELNDPCTCPREFPMCICGKKPSVRLISRKGIEPTKEEVEENPRSRSAKLRIIEKL.

Residues 33–35 (AGH), Asp53, Phe79, Asp100, and Gln107 contribute to the S-adenosyl-L-methionine site.

This sequence belongs to the methyltransferase superfamily. RsmH family.

Its subcellular location is the cytoplasm. It catalyses the reaction cytidine(1402) in 16S rRNA + S-adenosyl-L-methionine = N(4)-methylcytidine(1402) in 16S rRNA + S-adenosyl-L-homocysteine + H(+). Its function is as follows. Specifically methylates the N4 position of cytidine in position 1402 (C1402) of 16S rRNA. The protein is Ribosomal RNA small subunit methyltransferase H of Clostridium botulinum (strain Eklund 17B / Type B).